Here is a 154-residue protein sequence, read N- to C-terminus: Terephthalate 1,2-dioxygenase, terminal oxygenase component subunit beta 1 (154 aa).

The protein belongs to the bacterial ring-hydroxylating dioxygenase beta subunit family. Heterotetramer composed of 2 alpha (TphA2I and TphA2II) and 2 beta (TphA3I and TphA3II) subunits. Part of a multicomponent enzyme system composed of a reductase (TphA1I or TphA1II) and a two-subunit oxygenase component (TphA2I or TphA2II and TphA3I or TphA3II). Fe cation is required as a cofactor.

It carries out the reaction terephthalate + NADH + O2 + H(+) = (3S,4R)-3,4-dihydroxycyclohexa-1,5-diene-1,4-dicarboxylate + NAD(+). Its activity is regulated as follows. Inhibited by EDTA. Component of the terephthalate 1,2-dioxygenase multicomponent enzyme system which catalyzes the dioxygenation of terephthalate (TER/TPA) to 1,2-dihydroxy-3,5-cyclohexadiene-1,4-dicarboxylic acid (DCD). It can also use 2,5-dicarboxypyridine (PDC) and 1,4-napthalenedicarboxylic acid (NDC) as substrates, and preferentially uses NADPH which is the physiological electron donor. The chain is Terephthalate 1,2-dioxygenase, terminal oxygenase component subunit beta 1 (tphA3I) from Comamonas sp.